The primary structure comprises 249 residues: Triosephosphate isomerase (249 aa).

N9–K11 is a binding site for substrate. Residue H95 is the Electrophile of the active site. The active-site Proton acceptor is the E167. Substrate-binding positions include G173, S213, and G234–G235.

The protein belongs to the triosephosphate isomerase family. In terms of assembly, homodimer.

It is found in the cytoplasm. The catalysed reaction is D-glyceraldehyde 3-phosphate = dihydroxyacetone phosphate. It participates in carbohydrate biosynthesis; gluconeogenesis. Its pathway is carbohydrate degradation; glycolysis; D-glyceraldehyde 3-phosphate from glycerone phosphate: step 1/1. Functionally, involved in the gluconeogenesis. Catalyzes stereospecifically the conversion of dihydroxyacetone phosphate (DHAP) to D-glyceraldehyde-3-phosphate (G3P). The chain is Triosephosphate isomerase from Solibacter usitatus (strain Ellin6076).